The chain runs to 1419 residues: MSFEVGTRCWYPNSEAGWIGCEVTKNDFQDGTYHIELTSETGLVIPIETKHLESNNAMENNHEFLPVLRNPPILEATHDLTTLSYLNEPAVLHAIKERYNQRNIYTYSGIVLIATNPFDKVEELYSSEMIQAYARKNRDEMAPHIFAIAEEAYREMINNDQNQTIIVSGESGAGKTVSAKYIMRFFASVEEEHFNKEGDSKHQEEMSDIEVKILATNPVMEAFGNAKTTRNDNSSRFGKYLQILFDSNKNIIGSSIKTYLLERSRLVFQPTSERNYHIFYQMLSGLSSDMKKQLYLTNAEDFFYLNQGGESTINGIDDSLEYSTTIESLSTVGIDTEVQLQIFKILAALLHIGNIEIKKTRTDATLSSTDPSLQKACELLGLDPLTFSKWITKKQINTRSEKIISNLSFNQALVARDSVAKFIYSSLFDWLVGNINNVLCTSQVSETINSFIGVLDIYGFEHFEQNSFEQFCINYANEKLQQEFNHHVFKLEQEEYVKEEIEWSFIEFSDNQPCIDLIENKLGILSLLDEESRLPAGSDESWTTKLYQTFNKPPSNTVFGKPRFGQNKFIISHYAVDVTYEVDGFIEKNKDTISESQLEVLKATTNPTLATIFEFSEAENKTNITEQAGTIQRKTINRKPTLGSIFKRSLVELMETINSTNVHYIRCIKPNTEKEAWKFDNLMVLSQLRACGVLETIKISCAGFPSRWAFEEFIQRYYLLAPTDQWGRVTADMEMSLEDMVAFCDLILSEKIDSKDKYQIGKTKIFFKAGVLAYLEKIRSDKVTELAVLIQKHIRAKYYRSLYLQAMLSIKNCQSLIRGVQSRQRVDFEMKTDAATLLQTLHRSTRVRSQVFETLKNILEVQTAIRRVLVSNFIQREFESRSAIMIQSKIRANSPKHRYQTLKTGTILIQALVRRKQSQEKLKQLKIQAESAASLKNSAAGIQKELIGFIEELISNIKENDAKTTEYKSLLKHTSLPVVTGTNERTAAYISTKNQVEEDKVTIRTILTKYETLKDLCRKELKSLESLEKGVNDEKFASSLQSSLELIKRDISDLRINAIEKDNERTSTSSELKDGTDCTDNAVVQILTKRQGDLINDLVNVVFLEFQIPQRGRTKDCEHFYPVKLLISIVNLMNKFGLRKSSHSILKQTVQDLIGKISSMDAKKCVTFGLYWIISLHKLSSLPQEPAVLNKLQDKFYKTWLKQCFNQMKTVDSILILFDTISEFTLFFQGTTELLTNIITALLQHINAKWFNDLLIKQNTLSWTHGLEKDSEIKKVLDWCNSHKIRNSTEYLRNVNQACKLLQLRISNISDFQLVCEFCYDLSSLQMHALLTKYRPTQFEKPIPVDVLNHLSNTARRERTTMKRELTLDAGTETYSVENLFQGHPIEASDEHDDINQLINQLPSDKDFPVIKELGSLLA.

In terms of domain architecture, Myosin N-terminal SH3-like spans E4 to A57. Positions E75–S780 constitute a Myosin motor domain. G169–T176 contributes to the ATP binding site. Residues F451–E531 are actin-binding. 6 IQ domains span residues V783 to Q805, A806 to M830, K831 to T854, L855 to F878, E879 to T901, and L902 to S931. Positions I909–A940 form a coiled coil. Residues K1061–A1419 form a non alpha-helical, tail domain region. One can recognise a Dilute domain in the interval H1143 to R1357.

Belongs to the TRAFAC class myosin-kinesin ATPase superfamily. Myosin family. In terms of assembly, homodimer. Interacts with calmodulin (CMD1) and the myosin light chain MLC1 through its IQ repeats.

Its function is as follows. Myosin heavy chain that is required for the cell cycle-regulated transport of various organelles and proteins for their segregation. Functions by binding with its tail domain to receptor proteins on organelles and exerting force with its N-terminal motor domain against actin filaments, thereby transporting its cargo along polarized actin cables. This Naumovozyma castellii (Yeast) protein is Myosin-2B (MYO2B).